The chain runs to 661 residues: UvrABC system protein B (661 aa).

The region spanning 25 to 182 (AGLNSKKRSQ…NDLINLQYKR (158 aa)) is the Helicase ATP-binding domain. ATP is bound at residue 38 to 45 (GITGSGKT). The Beta-hairpin signature appears at 91–114 (YYDYYQPEAYIARTDTFIEKDSSI). The Helicase C-terminal domain maps to 430 to 592 (QVEDLISEIQ…IIPKTINRAI (163 aa)). Residues 621-656 (KANINKLNKEMLKAASNLEFEQAAKLRDQLKTLEAA) enclose the UVR domain.

The protein belongs to the UvrB family. Forms a heterotetramer with UvrA during the search for lesions. Interacts with UvrC in an incision complex.

Its subcellular location is the cytoplasm. Its function is as follows. The UvrABC repair system catalyzes the recognition and processing of DNA lesions. A damage recognition complex composed of 2 UvrA and 2 UvrB subunits scans DNA for abnormalities. Upon binding of the UvrA(2)B(2) complex to a putative damaged site, the DNA wraps around one UvrB monomer. DNA wrap is dependent on ATP binding by UvrB and probably causes local melting of the DNA helix, facilitating insertion of UvrB beta-hairpin between the DNA strands. Then UvrB probes one DNA strand for the presence of a lesion. If a lesion is found the UvrA subunits dissociate and the UvrB-DNA preincision complex is formed. This complex is subsequently bound by UvrC and the second UvrB is released. If no lesion is found, the DNA wraps around the other UvrB subunit that will check the other stand for damage. This Rickettsia akari (strain Hartford) protein is UvrABC system protein B.